The chain runs to 458 residues: F-box/FBD/LRR-repeat protein At1g78750 (458 aa).

Residues Val-17–Phe-67 form the F-box domain. LRR repeat units follow at residues Cys-152–Ile-183, Val-184–Arg-209, Val-231–Asp-258, Asp-302–Ser-327, and Phe-345–Ser-370. An FBD domain is found at Lys-376 to Leu-428.

This Arabidopsis thaliana (Mouse-ear cress) protein is F-box/FBD/LRR-repeat protein At1g78750.